We begin with the raw amino-acid sequence, 534 residues long: Pentatricopeptide repeat-containing protein At5g50990 (534 aa).

PPR repeat units lie at residues 128–158 (NVITWNLMIGGYVRNVQYEEALKALKNMLSF), 164–198 (NKFSFASSLAACARLGDLHHAKWVHSLMIDSGIEL), 199–229 (NAILSSALVDVYAKCGDIGTSREVFYSVKRN), 230–264 (DVSIWNAMITGFATHGLATEAIRVFSEMEAEHVSP), 265–295 (DSITFLGLLTTCSHCGLLEEGKEYFGLMSRR), and 301–331 (KLEHYGAMVDLLGRAGRVKEAYELIESMPIE). The segment at 336-408 (IWRSLLSSSR…AKGKSWLEFG (73 aa)) is type E motif. Residues 409 to 439 (GMIHRFKAGDTSHIETKAIYKVLEGLIQKTK) are type E(+) motif. The tract at residues 440 to 534 (SQGFVSDTDL…DGLCSCRDYW (95 aa)) is type DYW motif.

Belongs to the PPR family. PCMP-H subfamily.

The protein is Pentatricopeptide repeat-containing protein At5g50990 (PCMP-H59) of Arabidopsis thaliana (Mouse-ear cress).